A 141-amino-acid polypeptide reads, in one-letter code: Hemoglobin subunit alpha-A (141 aa).

Positions 1–141 (VLSAADKANV…VGAVLTAKYR (141 aa)) constitute a Globin domain. His58 contributes to the O2 binding site. Residue His87 coordinates heme b.

It belongs to the globin family. In terms of assembly, heterotetramer of two alpha chains and two beta chains. In terms of tissue distribution, red blood cells.

Its function is as follows. Involved in oxygen transport from the lung to the various peripheral tissues. The sequence is that of Hemoglobin subunit alpha-A (HBAA) from Chloephaga melanoptera (Andean goose).